We begin with the raw amino-acid sequence, 306 residues long: B- and T-lymphocyte attenuator (306 aa).

An N-terminal signal peptide occupies residues 1–29 (MKTVPAMLGTPRLFREFFILHLGLWSILC). Over 30–183 (EKATKRNDEE…ERPGRTWLLY (154 aa)) the chain is Extracellular. The 103-residue stretch at 37 to 139 (DEECPVQLTI…SQVINSHSVT (103 aa)) folds into the Ig-like V-type domain. 3 cysteine pairs are disulfide-bonded: Cys-40–Cys-69, Cys-64–Cys-124, and Cys-78–Cys-85. N-linked (GlcNAc...) asparagine glycosylation is found at Asn-74, Asn-81, Asn-101, Asn-119, Asn-148, and Asn-165. A helical membrane pass occupies residues 184–204 (TLLPLGALLLLLACVCLLCFL). At 205–306 (KRIQGKEKKP…TEYASICVRS (102 aa)) the chain is on the cytoplasmic side.

Interacts with tyrosine phosphatases PTPN6/SHP-1 and PTPN11/SHP-2. Interacts with TNFRSF14/HVEM (via cysteine-rich domain 1). Post-translationally, phosphorylated on Tyr residues by TNFRSF14 and by antigen receptors cross-linking, both inducing association with PTPN6 and PTPN11. N-glycosylated. As to expression, expressed in splenic T- and B-cells as well as lymph node tissues but very weakly in somatic tissues. Also expressed in macrophages, NK cells and dendritic cells. A polymorphic tissue distribution between several strains is seen.

It is found in the cell membrane. In terms of biological role, inhibitory receptor on lymphocytes that negatively regulates antigen receptor signaling via PTPN6/SHP-1 and PTPN11/SHP-2. May interact in cis (on the same cell) or in trans (on other cells) with TNFRSF14. In cis interactions, appears to play an immune regulatory role inhibiting in trans interactions in naive T cells to maintain a resting state. In trans interactions, can predominate during adaptive immune response to provide survival signals to effector T cells. This Mus musculus (Mouse) protein is B- and T-lymphocyte attenuator.